Reading from the N-terminus, the 188-residue chain is Ribosome-recycling factor (188 aa).

Belongs to the RRF family.

It localises to the cytoplasm. In terms of biological role, responsible for the release of ribosomes from messenger RNA at the termination of protein biosynthesis. May increase the efficiency of translation by recycling ribosomes from one round of translation to another. The protein is Ribosome-recycling factor of Gluconacetobacter diazotrophicus (strain ATCC 49037 / DSM 5601 / CCUG 37298 / CIP 103539 / LMG 7603 / PAl5).